Consider the following 302-residue polypeptide: Acetylglutamate kinase (302 aa).

Residues 73–74 (GG), arginine 95, and asparagine 200 each bind substrate.

This sequence belongs to the acetylglutamate kinase family. ArgB subfamily.

Its subcellular location is the cytoplasm. The catalysed reaction is N-acetyl-L-glutamate + ATP = N-acetyl-L-glutamyl 5-phosphate + ADP. It functions in the pathway amino-acid biosynthesis; L-arginine biosynthesis; N(2)-acetyl-L-ornithine from L-glutamate: step 2/4. In terms of biological role, catalyzes the ATP-dependent phosphorylation of N-acetyl-L-glutamate. This Sphingopyxis alaskensis (strain DSM 13593 / LMG 18877 / RB2256) (Sphingomonas alaskensis) protein is Acetylglutamate kinase.